The primary structure comprises 142 residues: Protein archease (142 aa).

3 residues coordinate Ca(2+): Asp12, Asp141, and Leu142.

The protein belongs to the archease family.

Its function is as follows. Activates the tRNA-splicing ligase complex by facilitating the enzymatic turnover of catalytic subunit RtcB. Acts by promoting the guanylylation of RtcB, a key intermediate step in tRNA ligation. Can also alter the NTP specificity of RtcB such that ATP, dGTP or ITP is used efficiently. The chain is Protein archease from Thermococcus gammatolerans (strain DSM 15229 / JCM 11827 / EJ3).